A 334-amino-acid chain; its full sequence is Protein-methionine-sulfoxide reductase catalytic subunit MsrP (334 aa).

A signal peptide (tat-type signal) is located at residues 1–44 (MKKIRPLTEADVTAESAFFMQRRQVLKALGISAAALSLPSTAQA). Residues N88, 91-92 (YE), C146, T181, N233, R238, and 249-251 (GIK) contribute to the Mo-molybdopterin site.

The protein belongs to the MsrP family. As to quaternary structure, heterodimer of a catalytic subunit (MsrP) and a heme-binding subunit (MsrQ). Requires Mo-molybdopterin as cofactor. Predicted to be exported by the Tat system. The position of the signal peptide cleavage has not been experimentally proven.

The protein localises to the periplasm. It carries out the reaction L-methionyl-[protein] + a quinone + H2O = L-methionyl-(S)-S-oxide-[protein] + a quinol. The enzyme catalyses L-methionyl-[protein] + a quinone + H2O = L-methionyl-(R)-S-oxide-[protein] + a quinol. Functionally, part of the MsrPQ system that repairs oxidized periplasmic proteins containing methionine sulfoxide residues (Met-O), using respiratory chain electrons. Thus protects these proteins from oxidative-stress damage caused by reactive species of oxygen and chlorine generated by the host defense mechanisms. MsrPQ is essential for the maintenance of envelope integrity under bleach stress, rescuing a wide series of structurally unrelated periplasmic proteins from methionine oxidation, including the primary periplasmic chaperone SurA and the lipoprotein Pal. The catalytic subunit MsrP is non-stereospecific, being able to reduce both (R-) and (S-) diastereoisomers of methionine sulfoxide. The chain is Protein-methionine-sulfoxide reductase catalytic subunit MsrP from Salmonella dublin (strain CT_02021853).